A 128-amino-acid polypeptide reads, in one-letter code: Iron-sulfur cluster insertion protein ErpA 1 (128 aa).

3 residues coordinate iron-sulfur cluster: Cys-47, Cys-111, and Cys-113.

The protein belongs to the HesB/IscA family. As to quaternary structure, homodimer. Requires iron-sulfur cluster as cofactor.

Its function is as follows. Required for insertion of 4Fe-4S clusters for at least IspG. This chain is Iron-sulfur cluster insertion protein ErpA 1, found in Methylococcus capsulatus (strain ATCC 33009 / NCIMB 11132 / Bath).